A 408-amino-acid chain; its full sequence is Tyrosine--tRNA ligase (408 aa).

Residues 50–59 (PTGKDLTLGH) carry the 'HIGH' region motif. The short motif at 234–238 (KMSKS) is the 'KMSKS' region element. Lys237 serves as a coordination point for ATP. The S4 RNA-binding domain occupies 346–407 (MQAARVLFTA…GKRKYGRVVL (62 aa)).

Belongs to the class-I aminoacyl-tRNA synthetase family. TyrS type 2 subfamily. Homodimer.

It is found in the cytoplasm. It catalyses the reaction tRNA(Tyr) + L-tyrosine + ATP = L-tyrosyl-tRNA(Tyr) + AMP + diphosphate + H(+). Its function is as follows. Catalyzes the attachment of tyrosine to tRNA(Tyr) in a two-step reaction: tyrosine is first activated by ATP to form Tyr-AMP and then transferred to the acceptor end of tRNA(Tyr). The sequence is that of Tyrosine--tRNA ligase from Symbiobacterium thermophilum (strain DSM 24528 / JCM 14929 / IAM 14863 / T).